A 447-amino-acid polypeptide reads, in one-letter code: Hemogen (447 aa).

A disordered region spans residues 1-91 (MDLGKDQSLS…EMKVELPSQL (91 aa)). Residues 7–86 (QSLSKLHQTP…RQQNTEMKVE (80 aa)) are necessary for nuclear localization. Basic and acidic residues-rich tracts occupy residues 14 to 25 (QTPDHHQEESHV) and 35 to 49 (RNRE…EAQE). A compositionally biased stretch (basic residues) spans 59 to 78 (EKKHKRQRTGKRSERGRKRQ). Phosphoserine is present on residues S89 and S122. A disordered region spans residues 137-156 (QESVTLQENSSEYQATAVQN). Position 200 is a phosphoserine (S200). 2 disordered regions span residues 210-280 (AKVL…MAVP) and 306-337 (AMSK…PGSE). Position 217 is a phosphothreonine (T217). The segment covering 306–316 (AMSKDPSHKTT) has biased composition (basic and acidic residues).

It is found in the nucleus. Its function is as follows. Regulates the proliferation and differentiation of hematopoietic cells. Overexpression block the TPA-induced megakaryocytic differentiation in the K562 cell model. May also prevent cell apoptosis through the activation of the nuclear factor-kappa B (NF-kB). This is Hemogen (HEMGN) from Bos taurus (Bovine).